A 204-amino-acid polypeptide reads, in one-letter code: Serotonin N-acetyltransferase (204 aa).

Threonine 28 carries the post-translational modification Phosphothreonine; by PKA. Positions 32-193 (SEFRCLTPED…SFTELHCSLQ (162 aa)) constitute an N-acetyltransferase domain. A substrate-binding site is contributed by leucine 121. Residues 121–123 (LAV) and 129–134 (QQGRGP) each bind acetyl-CoA. Methionine 156 lines the substrate pocket. 165-167 (YER) is an acetyl-CoA binding site. Residue serine 202 is modified to Phosphoserine.

The protein belongs to the acetyltransferase family. AANAT subfamily. As to quaternary structure, monomer. Interacts with several 14-3-3 proteins, including YWHAB, YWHAE, YWHAG and YWHAZ, preferentially when phosphorylated at Thr-28. Phosphorylation on Ser-202 also allows binding to YWHAZ, but with lower affinity. The interaction with YWHAZ considerably increases affinity for arylalkylamines and acetyl-CoA and protects the enzyme from dephosphorylation and proteasomal degradation. It may also prevent thiol-dependent inactivation. Post-translationally, cAMP-dependent phosphorylation regulates AANAT activity by promoting interaction with 14-3-3 proteins. Phosphorylation levels exhibit night/day variations, with an increase during nighttime. In terms of tissue distribution, highly expressed in pineal gland and in the photoreceptor outer segments in the retina. Expressed at about 100-fold lower levels in the pituitary gland and testis. Not detected in other tissues.

It is found in the cytoplasm. It catalyses the reaction a 2-arylethylamine + acetyl-CoA = an N-acetyl-2-arylethylamine + CoA + H(+). The protein operates within aromatic compound metabolism; melatonin biosynthesis; melatonin from serotonin: step 1/2. Functionally, controls the night/day rhythm of melatonin production in the pineal gland. Catalyzes the N-acetylation of serotonin into N-acetylserotonin, the penultimate step in the synthesis of melatonin. In Macaca mulatta (Rhesus macaque), this protein is Serotonin N-acetyltransferase (AANAT).